Reading from the N-terminus, the 211-residue chain is MTKVLYITGHPNDETVSNSMAAGKSFIESYKQSNPDHEVVHIDLYDTFIPLIDKEVFDGWGKLQSGKGFEALSETEQQKVARLNELSDEFAAADKYIFVTPMWNLSFPAVVKAYIDAVAVAGKAFKYTAEGAVGLLTDKKALLIQSRGGIYSEGPAADFELGNRYLQTILGFFGVPSVEELVIEGHNQMPEKAEEIKADGVRRAEALGKTF.

FMN is bound by residues 17-19 (SNS), 102-105 (MWNL), and 146-149 (SRGG).

It belongs to the azoreductase type 1 family. As to quaternary structure, homodimer. The cofactor is FMN.

The catalysed reaction is 2 a quinone + NADH + H(+) = 2 a 1,4-benzosemiquinone + NAD(+). It catalyses the reaction N,N-dimethyl-1,4-phenylenediamine + anthranilate + 2 NAD(+) = 2-(4-dimethylaminophenyl)diazenylbenzoate + 2 NADH + 2 H(+). Quinone reductase that provides resistance to thiol-specific stress caused by electrophilic quinones. In terms of biological role, also exhibits azoreductase activity. Catalyzes the reductive cleavage of the azo bond in aromatic azo compounds to the corresponding amines. The protein is FMN-dependent NADH:quinone oxidoreductase of Macrococcus caseolyticus (strain JCSC5402) (Macrococcoides caseolyticum).